The primary structure comprises 556 residues: MRRFVYCKVVLATSLMWVLVDVFLLLYFSECNKCDDKKERSLLPALRAVISRNQEGPGEMGKAVLIPKDDQEKMKELFKINQFNLMASDLIALNRSLPDVRLEGCKTKVYPDELPNTSVVIVFHNEAWSTLLRTVYSVINRSPHYLLSEVILVDDASERDFLKLTLENYVKNLEVPVKIIRMEERSGLIRARLRGAAASKGQVITFLDAHCECTLGWLEPLLARIKEDRKTVVCPIIDVISDDTFEYMAGSDMTYGGFNWKLNFRWYPVPQREMDRRKGDRTLPVRTPTMAGGLFSIDRNYFEEIGTYDAGMDIWGGENLEMSFRIWQCGGSLEIVTCSHVGHVFRKATPYTFPGGTGHVINKNNRRLAEVWMDEFKDFFYIISPGVVKVDYGDVSVRKTLRENLKCKPFSWYLENIYPDSQIPRRYYSLGEIRNVETNQCLDNMGRKENEKVGIFNCHGMGGNQVFSYTADKEIRTDDLCLDVSRLNGPVIMLKCHHMRGNQLWEYDAERLTLRHVNSNQCLDEPSEEDKMVPTMQDCSGSRSQQWLLRNMTLGT.

Topologically, residues 1–4 (MRRF) are cytoplasmic. Residues 5–27 (VYCKVVLATSLMWVLVDVFLLLY) traverse the membrane as a helical; Signal-anchor for type II membrane protein segment. Residues 28-556 (FSECNKCDDK…WLLRNMTLGT (529 aa)) are Lumenal-facing. Asn94 and Asn116 each carry an N-linked (GlcNAc...) asparagine glycan. 5 disulfides stabilise this stretch: Cys105/Cys338, Cys329/Cys407, Cys441/Cys458, Cys481/Cys496, and Cys522/Cys539. The catalytic subdomain A stretch occupies residues 114–224 (LPNTSVVIVF…LGWLEPLLAR (111 aa)). Substrate contacts are provided by Asp155 and Arg185. Mn(2+) contacts are provided by Asp208 and His210. Positions 284–346 (PVRTPTMAGG…TCSHVGHVFR (63 aa)) are catalytic subdomain B. Residue Trp315 participates in substrate binding. His343 is a binding site for Mn(2+). Substrate-binding residues include Arg346 and Tyr351. One can recognise a Ricin B-type lectin domain in the interval 428 to 550 (YSLGEIRNVE…GSRSQQWLLR (123 aa)). The N-linked (GlcNAc...) asparagine glycan is linked to Asn551.

It belongs to the glycosyltransferase 2 family. GalNAc-T subfamily. Mn(2+) is required as a cofactor. As to expression, specifically expressed in neuronal cells. Expressed in fetal brain, whole adult brain, cerebral cortex and cerebellum. Not expressed in other tissues tested.

Its subcellular location is the golgi apparatus membrane. The catalysed reaction is L-seryl-[protein] + UDP-N-acetyl-alpha-D-galactosamine = a 3-O-[N-acetyl-alpha-D-galactosaminyl]-L-seryl-[protein] + UDP + H(+). It catalyses the reaction L-threonyl-[protein] + UDP-N-acetyl-alpha-D-galactosamine = a 3-O-[N-acetyl-alpha-D-galactosaminyl]-L-threonyl-[protein] + UDP + H(+). The protein operates within protein modification; protein glycosylation. Functionally, catalyzes the initial reaction in O-linked oligosaccharide biosynthesis, the transfer of an N-acetyl-D-galactosamine (GalNAc) residue from UDP-GalNAc to a serine or threonine residue on the protein receptor. Generates GalNAc-O-Ser/Thr structure also known as Tn antigen, which itself is immunogenic but also serves as a precursor for the synthesis of different mucin-type O-glycan core structures. Contributes to the synthesis of O-linked glycans on mucins and proteoglycans of the central nervous system. May promote neurogenesis through glycosylation and stabilization of PDPN. In terms of biological role, can glycosylate both unmodified peptides and glycopeptides that already contain an O-linked GalNAc sugar. Transfers GalNAc to Thr-/Ser-rich tandem repeats GTTPSPVPTTSTTSAP of MUC5AC, specifically on Thr-3 of non-glycosylated MUC5AC peptide, on Thr-12 and Thr-13 of preglycosylated MUC5AC at Thr-3 (MUC5AC-3), on Thr-3 of preglycosylated MUC5AC at Thr-13 (MUC5AC-13) and on Thr-12 of preglycosylated MUC5AC at Thr-3 and Thr-13 (MUC5AC-3,13). Transfers GalNAc to three consecutive serine/threonine residues on SDC3 forming a triplet-Tn epitope expressed in Purkinje cells of the developing brain. Its function is as follows. Can glycosylate both unmodified peptides and glycopeptides that already contain an O-linked GalNAc sugar. Transfers GalNAc to Thr-/Ser-rich tandem repeats GTTPSPVPTTSTTSAP of MUC5AC, specifically on Thr-3 of non-glycosylated MUC5AC peptide, on Thr-12 and Thr-13 of preglycosylated MUC5AC at Thr-3 (MUC5AC-3), on Thr-3 of preglycosylated MUC5AC at Thr-13 (MUC5AC-13) and on Thr-12 of preglycosylated MUC5AC at Thr-3 and Thr-13 (MUC5AC-3,13). The protein is Polypeptide N-acetylgalactosaminyltransferase 13 (GALNT13) of Homo sapiens (Human).